The primary structure comprises 72 residues: UPF0154 protein YneF (72 aa).

The helical transmembrane segment at 4 to 24 (WVGILVGVVALLIGVALGFFI) threads the bilayer.

Belongs to the UPF0154 family.

The protein localises to the membrane. The protein is UPF0154 protein YneF (yneF) of Bacillus subtilis (strain 168).